Here is a 279-residue protein sequence, read N- to C-terminus: Elongation factor Ts (279 aa).

The tract at residues 79-82 (TDFV) is involved in Mg(2+) ion dislocation from EF-Tu.

Belongs to the EF-Ts family.

It localises to the cytoplasm. Its function is as follows. Associates with the EF-Tu.GDP complex and induces the exchange of GDP to GTP. It remains bound to the aminoacyl-tRNA.EF-Tu.GTP complex up to the GTP hydrolysis stage on the ribosome. This is Elongation factor Ts from Phytoplasma mali (strain AT).